Consider the following 186-residue polypeptide: Trafficking protein particle complex subunit 5 (186 aa).

It belongs to the TRAPP small subunits family. BET3 subfamily. As to quaternary structure, part of the multisubunit TRAPP (transport protein particle) complex.

Its subcellular location is the golgi apparatus. The protein localises to the cis-Golgi network. It localises to the endoplasmic reticulum. In terms of biological role, may play a role in vesicular transport from endoplasmic reticulum to Golgi. In Dictyostelium discoideum (Social amoeba), this protein is Trafficking protein particle complex subunit 5 (trappc5).